Consider the following 330-residue polypeptide: Ribose-phosphate pyrophosphokinase (330 aa).

ATP is bound by residues 40–42 (DGE) and 99–100 (RQ). 2 residues coordinate Mg(2+): His133 and Asp174. Lys197 is an active-site residue. D-ribose 5-phosphate-binding positions include Arg199, Asp223, and 227–231 (DTGGT).

Belongs to the ribose-phosphate pyrophosphokinase family. Class I subfamily. As to quaternary structure, homohexamer. Mg(2+) is required as a cofactor.

It localises to the cytoplasm. The enzyme catalyses D-ribose 5-phosphate + ATP = 5-phospho-alpha-D-ribose 1-diphosphate + AMP + H(+). It participates in metabolic intermediate biosynthesis; 5-phospho-alpha-D-ribose 1-diphosphate biosynthesis; 5-phospho-alpha-D-ribose 1-diphosphate from D-ribose 5-phosphate (route I): step 1/1. In terms of biological role, involved in the biosynthesis of the central metabolite phospho-alpha-D-ribosyl-1-pyrophosphate (PRPP) via the transfer of pyrophosphoryl group from ATP to 1-hydroxyl of ribose-5-phosphate (Rib-5-P). The protein is Ribose-phosphate pyrophosphokinase of Ureaplasma parvum serovar 3 (strain ATCC 700970).